The following is a 354-amino-acid chain: Protein-arginine kinase (354 aa).

The region spanning 24-254 (IVLSSRIRLA…QQIIQQEKMA (231 aa)) is the Phosphagen kinase C-terminal domain. Residues 27-31 (SSRIR), His-92, Arg-125, 176-180 (RASVM), and 207-212 (RGIYGE) contribute to the ATP site. An RDXXRA motif of the pArg binding pocket involved in allosteric regulation motif is present at residues 337 to 342 (RDYRRA).

The protein belongs to the ATP:guanido phosphotransferase family.

It carries out the reaction L-arginyl-[protein] + ATP = N(omega)-phospho-L-arginyl-[protein] + ADP + H(+). Appears to be allosterically activated by the binding of pArg-containing polypeptides to the pArg-binding pocket localized in the C-terminal domain of McsB. Its function is as follows. Catalyzes the specific phosphorylation of arginine residues in a large number of proteins. Is part of the bacterial stress response system. Protein arginine phosphorylation has a physiologically important role and is involved in the regulation of many critical cellular processes, such as protein homeostasis, motility, competence, and stringent and stress responses, by regulating gene expression and protein activity. The protein is Protein-arginine kinase of Bacillus cereus (strain ATCC 10987 / NRS 248).